A 332-amino-acid chain; its full sequence is MAQNLPTIALLATGGTIAGSGVDASLGSYKSGELGVKELLKAIPSLNKIARIQGEQVSNIGSQDMNEEIWFKLAQRAQELLDDSRIQGVVITHGTDTLEESAYFLNLVLHSTKPVVLVGAMRNASSLSADGALNLYYAVSVAVNEKSANKGVLVVMDDTIFRVREVVKTHTTHISTFKALNSGAIGSVYYGKTRYYMQPLRKHTTESEFSLSQLKTPLPKVDIIYTHAGMTPDLFQASLNSHAKGVVIAGVGNGNVSAGFLKAMQEASQMGVVIVRSSRVGSGGVTSGEIDDKAYGFITSDNLNPQKARVLLQLALTKTNDKAKIQEMFEEY.

Positions 6-332 constitute an Asparaginase/glutaminase domain; sequence PTIALLATGG…AKIQEMFEEY (327 aa). Catalysis depends on Thr16, which acts as the O-isoaspartyl threonine intermediate. Residues Ser62 and 95–96 each bind substrate; that span reads TD.

It belongs to the asparaginase 1 family.

It localises to the cytoplasm. The catalysed reaction is L-asparagine + H2O = L-aspartate + NH4(+). This is Probable L-asparaginase (ansA) from Helicobacter pylori (strain J99 / ATCC 700824) (Campylobacter pylori J99).